The primary structure comprises 181 residues: uncharacterized protein (181 aa).

It belongs to the isochorismatase family.

This is an uncharacterized protein from Bacillus subtilis (strain 168).